The following is a 78-amino-acid chain: Small ribosomal subunit protein bS18 (78 aa).

This sequence belongs to the bacterial ribosomal protein bS18 family. In terms of assembly, part of the 30S ribosomal subunit. Forms a tight heterodimer with protein bS6.

In terms of biological role, binds as a heterodimer with protein bS6 to the central domain of the 16S rRNA, where it helps stabilize the platform of the 30S subunit. This chain is Small ribosomal subunit protein bS18, found in Thermobifida fusca (strain YX).